Consider the following 137-residue polypeptide: Hemoglobin subunit alpha-2 (137 aa).

One can recognise a Globin domain in the interval 1 to 137; it reads DDRSHILAIW…VGGSLTSKYR (137 aa). H54 contributes to the O2 binding site. H83 serves as a coordination point for heme b.

This sequence belongs to the globin family. The N-terminus of the mature protein is acetylated. As to expression, red blood cells.

The polypeptide is Hemoglobin subunit alpha-2 (Telmatobius peruvianus (Andean frog)).